The sequence spans 119 residues: Small capsomere-interacting protein (119 aa).

This sequence belongs to the herpesviridae small capsomere-interacting protein family. As to quaternary structure, interacts with the major capsid protein/MCP.

The protein localises to the virion. The protein resides in the host nucleus. Functionally, participates in the assembly of the infectious particles by decorating the outer surface of the capsid shell and thus forming a layer between the capsid and the tegument. Complexes composed of the major capsid protein and small capsomere-interacting protein/SCP assemble together in the host cytoplasm and are translocated to the nucleus, where they accumulate and participate in capsid assembly. The polypeptide is Small capsomere-interacting protein (Equine herpesvirus 1 (strain V592) (EHV-1)).